The primary structure comprises 372 residues: Pluviatolide O-methyltransferase (372 aa).

S-adenosyl-L-homocysteine is bound by residues G214, D237, D257, M258, and K271. Residue H275 is the Proton acceptor of the active site. Catalysis depends on residues D306 and E338.

The protein belongs to the class I-like SAM-binding methyltransferase superfamily. Cation-independent O-methyltransferase family. COMT subfamily. Homodimer. As to expression, mostly expressed in stems, and, to a lower extent, in leaves.

The enzyme catalyses (-)-pluviatolide + S-adenosyl-L-methionine = (-)-bursehernin + S-adenosyl-L-homocysteine + H(+). The protein operates within aromatic compound metabolism; phenylpropanoid biosynthesis. Its function is as follows. O-methyltransferase involved in the biosynthesis of etoposide, a chemotherapeutic compound of the topoisomerase inhibitor family. Catalyzes the methylation of (-)-pluviatolide to produce (-)-bursehernin. The protein is Pluviatolide O-methyltransferase of Sinopodophyllum hexandrum (Himalayan may apple).